We begin with the raw amino-acid sequence, 94 residues long: Integration host factor subunit beta (94 aa).

Belongs to the bacterial histone-like protein family. Heterodimer of an alpha and a beta chain.

This protein is one of the two subunits of integration host factor, a specific DNA-binding protein that functions in genetic recombination as well as in transcriptional and translational control. This chain is Integration host factor subunit beta, found in Mannheimia succiniciproducens (strain KCTC 0769BP / MBEL55E).